Here is a 428-residue protein sequence, read N- to C-terminus: Probable mitochondrial adenine nucleotide transporter BTL3 (428 aa).

Solcar repeat units lie at residues 129–212, 222–307, and 336–421; these read LNTT…YRGQ, TTNF…LKSA, and LGPM…MKVV. The next 6 membrane-spanning stretches (helical) occupy residues 132–152, 187–207, 228–248, 283–303, 342–362, and 390–410; these read TKHLWAGAFAAMVSRTCIAPL, GNLVNILRTAPFKSINFYAYD, FVAGAAAGVTASLLCLPLDTI, LVPSLVSMAPSGAVFYGVYDI, LLYGAIAGACSEAATYPFEVV, and VPALYAGLIPSLLQVLPSAAI.

It belongs to the mitochondrial carrier (TC 2.A.29) family.

The protein resides in the mitochondrion inner membrane. Probable mitochondrial adenylate carrier that catalyzes the transport of ATP, ADP and AMP. This is Probable mitochondrial adenine nucleotide transporter BTL3 from Arabidopsis thaliana (Mouse-ear cress).